The following is a 228-amino-acid chain: Probable methylthioribulose-1-phosphate dehydratase (228 aa).

C87 contributes to the substrate binding site. H105 and H107 together coordinate Zn(2+). E129 acts as the Proton donor/acceptor in catalysis. Position 185 (H185) interacts with Zn(2+).

It belongs to the aldolase class II family. MtnB subfamily. The cofactor is Zn(2+).

Its subcellular location is the cytoplasm. The catalysed reaction is 5-(methylsulfanyl)-D-ribulose 1-phosphate = 5-methylsulfanyl-2,3-dioxopentyl phosphate + H2O. It functions in the pathway amino-acid biosynthesis; L-methionine biosynthesis via salvage pathway; L-methionine from S-methyl-5-thio-alpha-D-ribose 1-phosphate: step 2/6. Catalyzes the dehydration of methylthioribulose-1-phosphate (MTRu-1-P) into 2,3-diketo-5-methylthiopentyl-1-phosphate (DK-MTP-1-P). This is Probable methylthioribulose-1-phosphate dehydratase from Drosophila willistoni (Fruit fly).